We begin with the raw amino-acid sequence, 434 residues long: E3 ubiquitin-protein ligase siah-1 (434 aa).

The segment at Phe27–Pro88 is disordered. Over residues Ser43–Ser55 the composition is skewed to low complexity. The span at Met74–Pro88 shows a compositional bias: polar residues. The RING-type; degenerate zinc-finger motif lies at Cys171–Arg206. The segment at Ile220 to Ile415 is SBD. The segment at Thr223–Lys283 adopts an SIAH-type; degenerate zinc-finger fold. Residues Cys228, Cys235, His247, Cys251, Cys258, Cys265, His277, and His282 each contribute to the Zn(2+) site.

It belongs to the SINA (Seven in absentia) family. In terms of assembly, interacts with tir-1.

It catalyses the reaction S-ubiquitinyl-[E2 ubiquitin-conjugating enzyme]-L-cysteine + [acceptor protein]-L-lysine = [E2 ubiquitin-conjugating enzyme]-L-cysteine + N(6)-ubiquitinyl-[acceptor protein]-L-lysine.. It participates in protein modification; protein ubiquitination. In terms of biological role, E3 ubiquitin-protein ligase that mediates ubiquitination and subsequent proteasomal degradation of target proteins. E3 ubiquitin ligases accept ubiquitin from an E2 ubiquitin-conjugating enzyme in the form of a thioester and then directly transfers the ubiquitin to targeted substrates. It probably triggers the ubiquitin-mediated degradation of different substrates. This chain is E3 ubiquitin-protein ligase siah-1, found in Caenorhabditis briggsae.